The sequence spans 343 residues: Matrix protein (343 aa).

The protein belongs to the morbillivirus/respirovirus/rubulavirus M protein family. Homodimer. Dimerization is critical for virion formation. Interacts with host ANP32B.

It localises to the virion. Its subcellular location is the host cell membrane. Its function is as follows. The M protein has a crucial role in virus assembly and interacts with the RNP complex as well as with the viral membrane. Associates with phosphatidylserine (PS) and phosphatidylinositol 4,5-bisphosphate (PIP2) at the plasma membrane. Interaction with PIP2 triggers matrix protein lattice polymerization. Matrix proteins induce host membrane deformation and curvature necessary for virion assembly/budding. The chain is Matrix protein (M) from Measles virus (strain Biken) (MeV).